We begin with the raw amino-acid sequence, 314 residues long: GDP-L-fucose synthase (314 aa).

Residues 15-21 (GHKGMVG) and 109-112 (LGSS) contribute to the NADP(+) site. The Proton donor/acceptor role is filled by Y140. NADP(+)-binding positions include K144, 167-170 (PTNL), and H183. Substrate is bound by residues K191, W206, R213, and D273.

Belongs to the NAD(P)-dependent epimerase/dehydratase family. Fucose synthase subfamily.

The enzyme catalyses GDP-beta-L-fucose + NADP(+) = GDP-4-dehydro-alpha-D-rhamnose + NADPH + H(+). It functions in the pathway nucleotide-sugar biosynthesis; GDP-L-fucose biosynthesis via de novo pathway; GDP-L-fucose from GDP-alpha-D-mannose: step 2/2. Its function is as follows. Catalyzes the two-step NADP-dependent conversion of GDP-4-dehydro-6-deoxy-D-mannose to GDP-fucose, involving an epimerase and a reductase reaction. In Sinorhizobium fredii (strain NBRC 101917 / NGR234), this protein is GDP-L-fucose synthase.